Reading from the N-terminus, the 334-residue chain is Biotin synthase (334 aa).

The Radical SAM core domain maps to 41-260 (TRLETASLLS…IAVARIMMPR (220 aa)). 3 residues coordinate [4Fe-4S] cluster: cysteine 56, cysteine 60, and cysteine 63. [2Fe-2S] cluster-binding residues include cysteine 100, cysteine 131, cysteine 191, and arginine 264.

It belongs to the radical SAM superfamily. Biotin synthase family. As to quaternary structure, homodimer. The cofactor is [4Fe-4S] cluster. It depends on [2Fe-2S] cluster as a cofactor.

It carries out the reaction (4R,5S)-dethiobiotin + (sulfur carrier)-SH + 2 reduced [2Fe-2S]-[ferredoxin] + 2 S-adenosyl-L-methionine = (sulfur carrier)-H + biotin + 2 5'-deoxyadenosine + 2 L-methionine + 2 oxidized [2Fe-2S]-[ferredoxin]. It functions in the pathway cofactor biosynthesis; biotin biosynthesis; biotin from 7,8-diaminononanoate: step 2/2. In terms of biological role, catalyzes the conversion of dethiobiotin (DTB) to biotin by the insertion of a sulfur atom into dethiobiotin via a radical-based mechanism. The chain is Biotin synthase from Bradyrhizobium sp. (strain ORS 278).